Reading from the N-terminus, the 409-residue chain is Elongation factor Tu (409 aa).

In terms of domain architecture, tr-type G spans lysine 10–glutamate 214. The G1 stretch occupies residues glycine 19–threonine 26. Glycine 19 to threonine 26 contributes to the GTP binding site. Threonine 26 serves as a coordination point for Mg(2+). A G2 region spans residues glycine 60–asparagine 64. The tract at residues aspartate 81 to glycine 84 is G3. GTP is bound by residues aspartate 81–histidine 85 and asparagine 136–aspartate 139. The interval asparagine 136–aspartate 139 is G4. Residues serine 174–leucine 176 are G5.

It belongs to the TRAFAC class translation factor GTPase superfamily. Classic translation factor GTPase family. EF-Tu/EF-1A subfamily. As to quaternary structure, monomer.

It is found in the cytoplasm. The enzyme catalyses GTP + H2O = GDP + phosphate + H(+). In terms of biological role, GTP hydrolase that promotes the GTP-dependent binding of aminoacyl-tRNA to the A-site of ribosomes during protein biosynthesis. The polypeptide is Elongation factor Tu (Synechococcus elongatus (strain ATCC 33912 / PCC 7942 / FACHB-805) (Anacystis nidulans R2)).